Here is a 194-residue protein sequence, read N- to C-terminus: Cysteine and glycine-rich protein 3 (194 aa).

Residues 1 to 5 (MPNWG) are interaction with TCAP. Positions 10–61 (CGACDKTVYHAEEIQCNGRSFHKTCFHCMACRKALDSTTVAAHESEIYCKVC) constitute an LIM zinc-binding 1 domain. A Nuclear localization signal motif is present at residues 64–69 (RKYGPK). The tract at residues 94–105 (QSPKPARAATTS) is interaction with CLF2. A phosphoserine mark is found at serine 95, serine 111, and serine 153. Positions 120–171 (CPRCGKSVYAAEKVMGGGKPWHKTCFPCAICGKSLESTNVTDKDGELYCKVC) constitute an LIM zinc-binding 2 domain.

As to quaternary structure, self-associates. Oligomeric in the cytoplasm and monomeric in the nucleus. Homooligomers preferentially form along the actin cytoskeleton. Interacts with TCAP, ACTN2 and NRAP. Interacts with LDHD, SPTB, MYOD1, MYOG, MYF6. Interacts with GLRX3 (via C-terminus); GLRX3 and calcineurin compete for interaction with CSRP3. Interacts with CFL2; the stoichiometry influences F-actin depolymerization and possibly two molecules of CFL2 can interact with one molecule of CSRP3 resulting in the highest functional impact; the interaction is stronger with phosphorylated CFL2. In terms of processing, phosphorylated by PKC/PRKCA. In terms of tissue distribution, high in striated muscle and adult heart.

It localises to the nucleus. The protein localises to the cytoplasm. The protein resides in the cytoskeleton. Its subcellular location is the myofibril. It is found in the sarcomere. It localises to the z line. Functionally, positive regulator of myogenesis. Acts as a cofactor for myogenic bHLH transcription factors such as MYOD1, and probably MYOG and MYF6. Enhances the DNA-binding activity of the MYOD1:TCF3 isoform E47 complex and may promote formation of a functional MYOD1:TCF3 isoform E47:MEF2A complex involved in myogenesis. Plays a crucial and specific role in the organization of cytosolic structures in cardiomyocytes. Could play a role in mechanical stretch sensing. May be a scaffold protein that promotes the assembly of interacting proteins at Z-line structures. It is essential for calcineurin anchorage to the Z line. Required for stress-induced calcineurin-NFAT activation. The role in regulation of cytoskeleton dynamics by association with CFL2 is reported conflictingly. Proposed to contribute to the maintenance of muscle cell integrity through an actin-based mechanism. Can directly bind to actin filaments, cross-link actin filaments into bundles without polarity selectivity and protect them from dilution- and cofilin-mediated depolymerization; the function seems to involve its self-association. In vitro can inhibit PKC/PRKCA activity. Proposed to be involved in cardiac stress signaling by down-regulating excessive PKC/PRKCA signaling. This Rattus norvegicus (Rat) protein is Cysteine and glycine-rich protein 3 (Csrp3).